The primary structure comprises 216 residues: Endo-1,4-beta-xylanase 1 (216 aa).

Residues 1–19 (MFLTSVVSLVVGAISCVSA) form the signal peptide. The 188-residue stretch at 29-216 (QMTPRNSCYG…SSGSASITVS (188 aa)) folds into the GH11 domain. Glutamate 112 acts as the Nucleophile in catalysis. Glutamate 203 acts as the Proton donor in catalysis.

It belongs to the glycosyl hydrolase 11 (cellulase G) family.

Its subcellular location is the secreted. The catalysed reaction is Endohydrolysis of (1-&gt;4)-beta-D-xylosidic linkages in xylans.. It participates in glycan degradation; xylan degradation. Its function is as follows. Endo-1,4-beta-xylanase involved in the hydrolysis of xylan, a major structural heterogeneous polysaccharide found in plant biomass representing the second most abundant polysaccharide in the biosphere, after cellulose. The protein is Endo-1,4-beta-xylanase 1 (xyl1) of Claviceps purpurea (Ergot fungus).